A 373-amino-acid polypeptide reads, in one-letter code: MTAQNPNLAALSAAGVSVWLDDLSRDRLRSGNLQELIDTKCVVGVTTNPSIFQKAFAEGHAYDSQIAELAARGADVDATIRTVTTDDVRNACDVLTREWENSDGVDGRVSIEVDPRLAGDTDKTIAQAVELWKIVDRPNLFIKIPATQAGLPAITAVLAEGISVNVTLIFSVERYRAVMDAYLAGMEKAREAGHDLSKIHSVASFFVSRVDTEIDKRLEKIGGERALALRGQAGVANARLAYAAYQEVFEGGQRYQALKADGARVQRPLWASTGVKNPDYSDTLYVTELVAPNTVNTMPEKTIDAVADHGVIRGDTVTGTGPDAQRVFDELAAVGVDLPDVFVVLENEGVEKFVDSWTELMEETQKQLGSASK.

Lysine 143 (schiff-base intermediate with substrate) is an active-site residue.

Belongs to the transaldolase family. Type 2 subfamily.

Its subcellular location is the cytoplasm. The catalysed reaction is D-sedoheptulose 7-phosphate + D-glyceraldehyde 3-phosphate = D-erythrose 4-phosphate + beta-D-fructose 6-phosphate. It functions in the pathway carbohydrate degradation; pentose phosphate pathway; D-glyceraldehyde 3-phosphate and beta-D-fructose 6-phosphate from D-ribose 5-phosphate and D-xylulose 5-phosphate (non-oxidative stage): step 2/3. Transaldolase is important for the balance of metabolites in the pentose-phosphate pathway. The polypeptide is Transaldolase (Mycolicibacterium paratuberculosis (strain ATCC BAA-968 / K-10) (Mycobacterium paratuberculosis)).